The chain runs to 1225 residues: uncharacterized protein (1225 aa).

Positions Met-1–Ala-27 are cleaved as a signal peptide. Cys-28 is lipidated: N-palmitoyl cysteine. A lipid anchor (S-diacylglycerol cysteine) is attached at Cys-28. Residues Gln-995 to Ser-1014 form a disordered region.

This sequence belongs to the MG307/MG309/MG338 family.

The protein localises to the cell membrane. This is an uncharacterized protein from Mycoplasma genitalium (strain ATCC 33530 / DSM 19775 / NCTC 10195 / G37) (Mycoplasmoides genitalium).